Here is a 184-residue protein sequence, read N- to C-terminus: Ribosome-recycling factor (184 aa).

Over residues 133 to 162 (RDGMDNLKQDENKKEISEDERKRHETEVQK) the composition is skewed to basic and acidic residues. The segment at 133-163 (RDGMDNLKQDENKKEISEDERKRHETEVQKL) is disordered.

It belongs to the RRF family.

Its subcellular location is the cytoplasm. Responsible for the release of ribosomes from messenger RNA at the termination of protein biosynthesis. May increase the efficiency of translation by recycling ribosomes from one round of translation to another. The chain is Ribosome-recycling factor from Sphingopyxis alaskensis (strain DSM 13593 / LMG 18877 / RB2256) (Sphingomonas alaskensis).